Here is a 426-residue protein sequence, read N- to C-terminus: Selenocysteine lyase (426 aa).

The residue at position 239 (lysine 239) is an N6-(pyridoxal phosphate)lysine. Cysteine 367 serves as the catalytic S-selanylcysteine intermediate.

This sequence belongs to the class-V pyridoxal-phosphate-dependent aminotransferase family. Homodimer. Pyridoxal 5'-phosphate is required as a cofactor.

The protein resides in the cytoplasm. Its subcellular location is the cytosol. It catalyses the reaction L-selenocysteine + AH2 = hydrogenselenide + L-alanine + A + H(+). Functionally, catalyzes the decomposition of L-selenocysteine to L-alanine and elemental selenium. The sequence is that of Selenocysteine lyase (scly) from Xenopus laevis (African clawed frog).